The following is an 85-amino-acid chain: Cysteine-rich venom protein 1 (85 aa).

Positions 1–21 are cleaved as a signal peptide; the sequence is MCRYALIVLVVVVVATNLSEA. 5 cysteine pairs are disulfide-bonded: cysteine 29–cysteine 63, cysteine 38–cysteine 59, cysteine 42–cysteine 53, cysteine 46–cysteine 84, and cysteine 65–cysteine 78. A TIL domain is found at 29–84; the sequence is CEPNRIYKTCGPACPPTCEDPDPDCNETPQCKAGCFCIPGLIENMKGGNCISPSLC.

This sequence belongs to the serine protease inhibitor-like (TIL domain-containing) family. As to expression, expressed by the venom gland.

It is found in the secreted. In terms of biological role, may be a phenoloxidase inhibitor that stabilizes or inhibits venom phenoloxidase while it is stored in the venom sac. This is Cysteine-rich venom protein 1 from Pimpla hypochondriaca (Parasitoid wasp).